Consider the following 358-residue polypeptide: Protein-glutamate methylesterase/protein-glutamine glutaminase 2 (358 aa).

One can recognise a Response regulatory domain in the interval 8–125 (RVLIVDDSAV…ARGLEGYAEE (118 aa)). Aspartate 59 carries the post-translational modification 4-aspartylphosphate. Positions 157 to 352 (PMPGSALRFR…LDRVAERLLA (196 aa)) constitute a CheB-type methylesterase domain. Active-site residues include serine 177, histidine 203, and aspartate 299.

Belongs to the CheB family. Post-translationally, phosphorylated by CheA. Phosphorylation of the N-terminal regulatory domain activates the methylesterase activity.

It localises to the cytoplasm. It carries out the reaction [protein]-L-glutamate 5-O-methyl ester + H2O = L-glutamyl-[protein] + methanol + H(+). The catalysed reaction is L-glutaminyl-[protein] + H2O = L-glutamyl-[protein] + NH4(+). Its function is as follows. Involved in chemotaxis. Part of a chemotaxis signal transduction system that modulates chemotaxis in response to various stimuli. Catalyzes the demethylation of specific methylglutamate residues introduced into the chemoreceptors (methyl-accepting chemotaxis proteins or MCP) by CheR. Also mediates the irreversible deamidation of specific glutamine residues to glutamic acid. This is Protein-glutamate methylesterase/protein-glutamine glutaminase 2 from Xanthomonas oryzae pv. oryzae (strain MAFF 311018).